A 119-amino-acid polypeptide reads, in one-letter code: Protein TusC (119 aa).

The protein belongs to the DsrF/TusC family. As to quaternary structure, heterohexamer, formed by a dimer of trimers. The hexameric TusBCD complex contains 2 copies each of TusB, TusC and TusD. The TusBCD complex interacts with TusE.

The protein resides in the cytoplasm. Part of a sulfur-relay system required for 2-thiolation of 5-methylaminomethyl-2-thiouridine (mnm(5)s(2)U) at tRNA wobble positions. The sequence is that of Protein TusC from Escherichia coli O127:H6 (strain E2348/69 / EPEC).